The chain runs to 316 residues: Melanocyte-stimulating hormone receptor (316 aa).

Over 1–37 (MPMQGAQRKLLGSLNSTPTATSNLGLAANHTGAPCLE) the chain is Extracellular. Asn29 carries N-linked (GlcNAc...) asparagine glycosylation. Residues 38–63 (VSIPDGLFLSLGLVSLVENMLVVAAI) form a helical membrane-spanning segment. Over 64–72 (AKNRNLHSP) the chain is Cytoplasmic. Residues 73 to 93 (MYCFICCLALSDLLVSGSNML) traverse the membrane as a helical segment. At 94–118 (ETAVVVLLEAGALATRASVVQQLHN) the chain is on the extracellular side. The helical transmembrane segment at 119-140 (TIDVLTYSSMLCSLCFVGAIAV) threads the bilayer. Over 141-163 (DRYISIFYALRYHSIMTLPRVQR) the chain is Cytoplasmic. Residues 164-183 (VIAAIWVASVTSSTLFITYY) form a helical membrane-spanning segment. Over 184-191 (EHVVALLC) the chain is Extracellular. A helical membrane pass occupies residues 192-210 (LVVFLTMLVLMAVLYVHML). The Cytoplasmic portion of the chain corresponds to 211-239 (ARACQHAQGITRLHKRQPPAHQGFGLRGA). Residues 240 to 265 (ATLTILLGIFFLCWGPFFLHLTLVVF) form a helical membrane-spanning segment. Over 266–278 (CPQHLTCSCIFKN) the chain is Extracellular. Residues 279-299 (FKVFLTLIICNTIIDPLIYAF) traverse the membrane as a helical segment. Residues 300 to 316 (RSQELCRTLKEVLLCSW) are Cytoplasmic-facing. Cys314 carries S-palmitoyl cysteine lipidation.

It belongs to the G-protein coupled receptor 1 family. Interacts with MGRN1, but does not undergo MGRN1-mediated ubiquitination; this interaction competes with GNAS-binding and thus inhibits agonist-induced cAMP production. Interacts with OPN3; the interaction results in a decrease in MC1R-mediated cAMP signaling and ultimately a decrease in melanin production in melanocytes.

The protein localises to the cell membrane. Functionally, receptor for MSH (alpha, beta and gamma) and ACTH. The activity of this receptor is mediated by G proteins which activate adenylate cyclase. Mediates melanogenesis, the production of eumelanin (black/brown) and phaeomelanin (red/yellow), via regulation of cAMP signaling in melanocytes. The chain is Melanocyte-stimulating hormone receptor (MC1R) from Cebus albifrons (White-fronted capuchin).